The primary structure comprises 874 residues: Isopimaradiene synthase, chloroplastic (874 aa).

The segment covering 1–12 (MALPSSSLSSRI) has biased composition (polar residues). Residues 1–20 (MALPSSSLSSRIPTGPHPLT) form a disordered region. A chloroplast-targeting transit peptide spans 1–37 (MALPSSSLSSRIPTGPHPLTHTQCIPHFSTTINAGIS). Mg(2+)-binding residues include D407, D409, D626, D630, N770, and E778. Residues 407-410 (DIDD) carry the DXDD motif motif. The DDXXD motif motif lies at 626–630 (DDLYD).

The protein belongs to the terpene synthase family. Tpsd subfamily. It depends on Mg(2+) as a cofactor. Requires Mn(2+) as cofactor.

The protein resides in the plastid. Its subcellular location is the chloroplast. The catalysed reaction is (+)-copalyl diphosphate = isopimara-8(14),15-diene + diphosphate. Its pathway is terpene metabolism; oleoresin biosynthesis. Functionally, terpene synthase (TPS) involved in the biosynthesis of diterpene natural products included in conifer oleoresin secretions and volatile emissions; these compounds contribute to biotic and abiotic stress defense against herbivores and pathogens. Catalyzes the conversion of (+)-copalyl diphosphate ((+)-CPP) to isopimaradiene. The polypeptide is Isopimaradiene synthase, chloroplastic (Picea sitchensis (Sitka spruce)).